The primary structure comprises 428 residues: Citrate synthase (428 aa).

Catalysis depends on residues histidine 265, histidine 306, and aspartate 363.

This sequence belongs to the citrate synthase family. Homohexamer.

The catalysed reaction is oxaloacetate + acetyl-CoA + H2O = citrate + CoA + H(+). It functions in the pathway carbohydrate metabolism; tricarboxylic acid cycle; isocitrate from oxaloacetate: step 1/2. Allosterically inhibited by NADH. The protein is Citrate synthase (gltA) of Pseudomonas aeruginosa (strain ATCC 15692 / DSM 22644 / CIP 104116 / JCM 14847 / LMG 12228 / 1C / PRS 101 / PAO1).